A 131-amino-acid polypeptide reads, in one-letter code: MSMSDPIADMLTRIRNAQMVEKVSVAMPSSKVKVAIAQVLKDEGYIDDFAVKTEGAKAELNIALKYYAGRPVIERLERVSKPGLRVYRGRNEIPQVMNGLGVAIVSTPKGVMTDRKARATGVGGEVICYVA.

The protein belongs to the universal ribosomal protein uS8 family. As to quaternary structure, part of the 30S ribosomal subunit. Contacts proteins S5 and S12.

One of the primary rRNA binding proteins, it binds directly to 16S rRNA central domain where it helps coordinate assembly of the platform of the 30S subunit. The sequence is that of Small ribosomal subunit protein uS8 from Burkholderia multivorans (strain ATCC 17616 / 249).